Consider the following 1581-residue polypeptide: Mediator of RNA polymerase II transcription subunit 1 (1581 aa).

An interaction with the Mediator complex and THRA region spans residues 1 to 670; the sequence is MKAQGETEES…YGSSPLERQN (670 aa). Residues 16–590 are interaction with ESR1; it reads MSSLLERLHA…SIKDRHESVG (575 aa). 2 interaction with the Mediator complex regions span residues 108 to 212 and 215 to 390; these read FYVE…GYLT and SGGH…SLQG. The interaction with THRA stretch occupies residues 405–644; sequence PLILNLIRHQ…MAGNTKNHPM (240 aa). The interval 542 to 788 is interaction with VDR; sequence PASSPGYGMT…TDILSDIAEE (247 aa). Position 588 is a phosphoserine (serine 588). The LXXLL motif 1 motif lies at 604–608; it reads LTSLL. 4 disordered regions span residues 609 to 705, 791 to 819, 868 to 895, and 947 to 1566; these read QITG…HQTE, KLPS…QSTL, LSNS…DDFK, and EHHS…DFMI. Pro residues predominate over residues 622–632; sequence PTPPHHTPPPV. Residues 622 to 701 form an interaction with PPARGC1A and THRA region; that stretch reads PTPPHHTPPP…SSRLPPEKPK (80 aa). Residues 645–649 carry the LXXLL motif 2 motif; that stretch reads LMNLL. Polar residues predominate over residues 655–675; sequence QDFSTLYGSSPLERQNSSSGS. The interaction with ESR1 stretch occupies residues 656–1065; sequence DFSTLYGSSP…TPPIPKITIQ (410 aa). A Phosphoserine modification is found at serine 664. The interval 681 to 715 is interaction with GATA1; sequence CSGSNKTKKKESSRLPPEKPKHQTEDDFQRELFSM. Residues 690–705 show a composition bias toward basic and acidic residues; that stretch reads KESSRLPPEKPKHQTE. Serine 794 is modified (phosphoserine). Position 804 is a phosphothreonine (threonine 804). The segment covering 807–819 has biased composition (polar residues); the sequence is RDSSSSGHSQSTL. The Integrase domain-binding motif (IBM) signature appears at 874–901; it reads QSGFGEEYFDESSQSGDNDDFKGFASQA. 2 positions are modified to phosphoserine: serine 886 and serine 952. Residues 962–973 are compositionally biased toward basic and acidic residues; sequence LGKEKTQKRVKE. Threonine 1031 carries the phosphothreonine; by MAPK1 or MAPK3 modification. Residues 1033–1050 show a composition bias toward low complexity; sequence PTSTGGSKSPGSSGRSQT. Phosphothreonine occurs at positions 1050 and 1056. Composition is skewed to low complexity over residues 1077–1093, 1100–1111, and 1119–1156; these read SSHS…SSGS, SSSSSSSSASTS, and SEGS…PGSS. Serine 1156 bears the Phosphoserine mark. Positions 1162–1195 are enriched in polar residues; the sequence is GLSSGSSSTKMKPQGKPSSLMNPSLSKPNISPSH. Lysine 1177 carries the post-translational modification N6-acetyllysine. Serine 1207 is subject to Phosphoserine. Phosphothreonine is present on threonine 1215. 2 stretches are compositionally biased toward low complexity: residues 1218–1227 and 1234–1293; these read SSKAKSPISS and MSGT…SKGK. Serine 1223 is subject to Phosphoserine. An interaction with TP53 region spans residues 1249 to 1421; the sequence is LGSSGSLSQK…KPGESSGEGL (173 aa). Serine 1302 carries the phosphoserine modification. The span at 1330–1345 shows a compositional bias: polar residues; it reads GVSTNSSSHPMSSKHN. Serine 1347 bears the Phosphoserine mark. The span at 1352–1364 shows a compositional bias: basic and acidic residues; the sequence is QGKREKSDKDKSK. Phosphoserine occurs at positions 1403 and 1433. Polar residues-rich tracts occupy residues 1425 to 1440 and 1448 to 1482; these read MASS…SGST and PSHS…SPSS. The residue at position 1440 (threonine 1440) is a Phosphothreonine. Threonine 1457 carries the post-translational modification Phosphothreonine; by MAPK1 or MAPK3. 5 positions are modified to phosphoserine: serine 1463, serine 1465, serine 1479, serine 1481, and serine 1482. A compositionally biased stretch (basic residues) spans 1496–1505; that stretch reads KHKKHKKEKK. Basic and acidic residues predominate over residues 1506–1522; the sequence is KVKDKDRDRDRDKDRDK. Position 1529 is an N6-acetyllysine (lysine 1529). Polar residues predominate over residues 1533–1552; the sequence is WSKSPISSDQSLSMTSNTIL.

This sequence belongs to the Mediator complex subunit 1 family. In terms of assembly, component of the Mediator complex, which is composed of MED1, MED4, MED6, MED7, MED8, MED9, MED10, MED11, MED12, MED13, MED13L, MED14, MED15, MED16, MED17, MED18, MED19, MED20, MED21, MED22, MED23, MED24, MED25, MED26, MED27, MED29, MED30, MED31, CCNC, CDK8 and CDC2L6/CDK11. The MED12, MED13, CCNC and CDK8 subunits form a distinct module termed the CDK8 module. Mediator containing the CDK8 module is less active than Mediator lacking this module in supporting transcriptional activation. Individual preparations of the Mediator complex lacking one or more distinct subunits have been variously termed ARC, CRSP, DRIP, PC2, SMCC and TRAP. This subunit specifically interacts with a number of nuclear receptors in a ligand-dependent fashion including AR, ESR1, ESR2, PPARA, PPARG, RORA, RXRA, RXRG, THRA, THRB and VDR. Interacts with CTNNB1, GABPA, GLI3, PPARGC1A and TP53. Interacts with GATA1 and YWHAH. Interacts with CLOCK; this interaction requires the presence of THRAP3. Interacts with CCAR1. Interacts with NR4A3. Interacts (via IBM motif) with PSIP1 (via IBD domain); phosphorylation increases its affinity for PSIP1. Interacts with USP22. Phosphorylated by MAPK1 or MAPK3 during G2/M phase which may enhance protein stability and promote entry into the nucleolus. Phosphorylation increases its interaction with PSIP1.

It is found in the nucleus. Its function is as follows. Component of the Mediator complex, a coactivator involved in the regulated transcription of nearly all RNA polymerase II-dependent genes. Mediator functions as a bridge to convey information from gene-specific regulatory proteins to the basal RNA polymerase II transcription machinery. Mediator is recruited to promoters by direct interactions with regulatory proteins and serves as a scaffold for the assembly of a functional preinitiation complex with RNA polymerase II and the general transcription factors. Acts as a coactivator for GATA1-mediated transcriptional activation during erythroid differentiation of K562 erythroleukemia cells. This is Mediator of RNA polymerase II transcription subunit 1 (MED1) from Pongo abelii (Sumatran orangutan).